Here is a 536-residue protein sequence, read N- to C-terminus: SNW domain-containing protein 1 (536 aa).

The segment at 1–46 (MALTSFLPAPTQLSQDQLEAEEKARSQRSRQTSLVSSRREPPPYGY) is disordered. At Ala-2 the chain carries N-acetylalanine. Ser-14 carries the phosphoserine modification. Lys-23 participates in a covalent cross-link: Glycyl lysine isopeptide (Lys-Gly) (interchain with G-Cter in SUMO2). The interval 59-79 (GDGGAFPEIHVAQYPLDMGRK) is interaction with PPIL1. Residues Lys-81, Lys-97, Lys-115, Lys-122, Lys-141, Lys-158, and Lys-170 each participate in a glycyl lysine isopeptide (Lys-Gly) (interchain with G-Cter in SUMO2) cross-link. An SNW region spans residues 174-339 (AQYIRYTPSQ…KARERRAGIK (166 aa)). Ser-182 and Ser-190 each carry phosphoserine. Residue Lys-193 forms a Glycyl lysine isopeptide (Lys-Gly) (interchain with G-Cter in SUMO2) linkage. The segment at 209–233 (PPRFKINKKIPRGPPSPPAPVMHSP) is disordered. Ser-224, Ser-232, and Ser-234 each carry phosphoserine. Glycyl lysine isopeptide (Lys-Gly) (interchain with G-Cter in SUMO2) cross-links involve residues Lys-240, Lys-258, Lys-286, Lys-339, Lys-344, Lys-416, and Lys-441. The interval 311–386 (KMAQKEKEKH…RSKLQRNENR (76 aa)) is disordered. Position 446 is a phosphoserine (Ser-446). A Glycyl lysine isopeptide (Lys-Gly) (interchain with G-Cter in SUMO2) cross-link involves residue Lys-452. Composition is skewed to basic and acidic residues over residues 470 to 489 (NRFV…RGRE) and 503 to 530 (KFLE…EHEG). The disordered stretch occupies residues 470 to 536 (NRFVPDKEFS…EHEGKKRRKE (67 aa)). 2 positions are modified to phosphoserine: Ser-479 and Ser-481. A Glycyl lysine isopeptide (Lys-Gly) (interchain with G-Cter in SUMO2) cross-link involves residue Lys-509.

This sequence belongs to the SNW family. Identified in the spliceosome C complex. Associates with U4/U6-U5 tri-small nuclear ribonucleoproteins (U4/U6-U5 tri-snRNPs). Component of the minor spliceosome, which splices U12-type introns. Interacts with SKI, SMAD2,SMAD3, RBPJ, RB1, PABPN1, MAGEA1, SIRT1, FOXN3, U2AF2, DAXX and ATP1B4. Interacts with PPIL1. Interacts with VDR and RXRA; preferentially associates with VDR:RXRA heterodimers. Interacts with NCOR2. Interacts with MAML1. Interacts with NOTCH1 NICD; the interaction involves multimerized NOTCH1 NICD. Forms a complex with NOTCH1 NICD and MAML1; the association is dissociated by RBPJ. Associates with positive transcription elongation factor b (P-TEFb). Component of the SNARP complex which consists at least of SNIP1, SNW1, THRAP3, BCLAF1 and PNN. As to quaternary structure, (Microbial infection) Interacts with human papillomavirus type-16 (HPV16) E7 protein. In terms of assembly, (Microbial infection) Interacts with EBV EBNA2; EBNA2 competes with NCOR2 for interaction with SNW1.

It is found in the nucleus. Functionally, involved in pre-mRNA splicing as component of the spliceosome. As a component of the minor spliceosome, involved in the splicing of U12-type introns in pre-mRNAs. Required for the specific splicing of CDKN1A pre-mRNA; the function probably involves the recruitment of U2AF2 to the mRNA. May recruit PPIL1 to the spliceosome. May be involved in cyclin-D1/CCND1 mRNA stability through the SNARP complex which associates with both the 3'end of the CCND1 gene and its mRNA. Involved in transcriptional regulation. Modulates TGF-beta-mediated transcription via association with SMAD proteins, MYOD1-mediated transcription via association with PABPN1, RB1-mediated transcriptional repression, and retinoid-X receptor (RXR)- and vitamin D receptor (VDR)-dependent gene transcription in a cell line-specific manner probably involving coactivators NCOA1 and GRIP1. Is involved in NOTCH1-mediated transcriptional activation. Binds to multimerized forms of Notch intracellular domain (NICD) and is proposed to recruit transcriptional coactivators such as MAML1 to form an intermediate preactivation complex which associates with DNA-bound CBF-1/RBPJ to form a transcriptional activation complex by releasing SNW1 and redundant NOTCH1 NICD. Its function is as follows. (Microbial infection) Is recruited by HIV-1 Tat to Tat:P-TEFb:TAR RNA complexes and is involved in Tat transcription by recruitment of MYC, MEN1 and TRRAP to the HIV promoter. In terms of biological role, (Microbial infection) Proposed to be involved in transcriptional activation by EBV EBNA2 of CBF-1/RBPJ-repressed promoters. This chain is SNW domain-containing protein 1 (SNW1), found in Homo sapiens (Human).